Reading from the N-terminus, the 328-residue chain is GMP reductase (328 aa).

Catalysis depends on Cys-176, which acts as the Thioimidate intermediate. 205 to 228 is a binding site for NADP(+); sequence IIADGGIRTHGDIAKSIRFGASMI.

The protein belongs to the IMPDH/GMPR family. GuaC type 2 subfamily.

The catalysed reaction is IMP + NH4(+) + NADP(+) = GMP + NADPH + 2 H(+). In terms of biological role, catalyzes the irreversible NADPH-dependent deamination of GMP to IMP. It functions in the conversion of nucleobase, nucleoside and nucleotide derivatives of G to A nucleotides, and in maintaining the intracellular balance of A and G nucleotides. In Streptococcus pneumoniae (strain Taiwan19F-14), this protein is GMP reductase.